The primary structure comprises 344 residues: Ribosomal RNA large subunit methyltransferase Cfr (344 aa).

The Proton acceptor role is filled by glutamate 90. The 234-residue stretch at 97–330 (KQGWESFCIS…ATVRTQFGSE (234 aa)) folds into the Radical SAM core domain. An intrachain disulfide couples cysteine 104 to cysteine 335. Residues cysteine 111, cysteine 115, and cysteine 118 each contribute to the [4Fe-4S] cluster site. Residues 157 to 158 (GE), serine 188, 211 to 213 (SLH), and asparagine 292 each bind S-adenosyl-L-methionine. Cysteine 335 acts as the S-methylcysteine intermediate in catalysis.

This sequence belongs to the radical SAM superfamily. RlmN family. Cfr subfamily. The cofactor is [4Fe-4S] cluster.

It is found in the cytoplasm. It catalyses the reaction adenosine(2503) in 23S rRNA + 2 reduced [2Fe-2S]-[ferredoxin] + 2 S-adenosyl-L-methionine = 8-methyladenosine(2503) in 23S rRNA + 5'-deoxyadenosine + L-methionine + 2 oxidized [2Fe-2S]-[ferredoxin] + S-adenosyl-L-homocysteine. Its function is as follows. Specifically methylates position 8 of adenine 2503 in 23S rRNA. Confers resistance to some classes of antibiotics. This Clostridium botulinum (strain Loch Maree / Type A3) protein is Ribosomal RNA large subunit methyltransferase Cfr.